Here is a 149-residue protein sequence, read N- to C-terminus: Ribosome maturation factor RimP (149 aa).

This sequence belongs to the RimP family.

Its subcellular location is the cytoplasm. In terms of biological role, required for maturation of 30S ribosomal subunits. The polypeptide is Ribosome maturation factor RimP (Clostridium acetobutylicum (strain ATCC 824 / DSM 792 / JCM 1419 / IAM 19013 / LMG 5710 / NBRC 13948 / NRRL B-527 / VKM B-1787 / 2291 / W)).